The sequence spans 287 residues: MSGLRLIVVSGLSGSGKSVALHTLEDAGYYCIDNLPVSLIGELARYAQNRDAPTGERFAVGLDARNPPHDLQCLPETLTALREQGIATEVLFLYAEDSILMRRYSETRRRHPLAEGDQPLADALRAERTLLEPLREVADWSIDTSRTTVHDLRGLISERVAGERSGLSVLVQSFGFKHGIPTDADYVFDARCLPNPHWEPQLRAYTGCDDCVRAFLESQPETEILFGQIDTLIRYWLPVHQQAGRSYLTVAVGCTGGQHRSVYLAERLAESLQEGCSHVSLRHRELS.

11–18 contacts ATP; sequence GLSGSGKS. 63–66 contacts GTP; the sequence is DARN.

This sequence belongs to the RapZ-like family.

Functionally, displays ATPase and GTPase activities. This is Nucleotide-binding protein Hhal_2130 from Halorhodospira halophila (strain DSM 244 / SL1) (Ectothiorhodospira halophila (strain DSM 244 / SL1)).